Here is an 869-residue protein sequence, read N- to C-terminus: DNA mismatch repair protein MutS (869 aa).

Residue Gly624–Ser631 participates in ATP binding.

This sequence belongs to the DNA mismatch repair MutS family.

Functionally, this protein is involved in the repair of mismatches in DNA. It is possible that it carries out the mismatch recognition step. This protein has a weak ATPase activity. This is DNA mismatch repair protein MutS from Solibacter usitatus (strain Ellin6076).